The sequence spans 402 residues: ORC1-type DNA replication protein 17 (402 aa).

Y223 and R235 together coordinate ATP.

It belongs to the CDC6/cdc18 family.

In terms of biological role, involved in regulation of DNA replication. The protein is ORC1-type DNA replication protein 17 (cdc6q) of Haloarcula marismortui (strain ATCC 43049 / DSM 3752 / JCM 8966 / VKM B-1809) (Halobacterium marismortui).